Here is a 317-residue protein sequence, read N- to C-terminus: Acetyl-coenzyme A carboxylase carboxyl transferase subunit alpha (317 aa).

In terms of domain architecture, CoA carboxyltransferase C-terminal spans 33 to 294 (NINKEINCLR…KNRILKDLKE (262 aa)).

The protein belongs to the AccA family. As to quaternary structure, acetyl-CoA carboxylase is a heterohexamer composed of biotin carboxyl carrier protein (AccB), biotin carboxylase (AccC) and two subunits each of ACCase subunit alpha (AccA) and ACCase subunit beta (AccD).

It is found in the cytoplasm. It catalyses the reaction N(6)-carboxybiotinyl-L-lysyl-[protein] + acetyl-CoA = N(6)-biotinyl-L-lysyl-[protein] + malonyl-CoA. The protein operates within lipid metabolism; malonyl-CoA biosynthesis; malonyl-CoA from acetyl-CoA: step 1/1. Component of the acetyl coenzyme A carboxylase (ACC) complex. First, biotin carboxylase catalyzes the carboxylation of biotin on its carrier protein (BCCP) and then the CO(2) group is transferred by the carboxyltransferase to acetyl-CoA to form malonyl-CoA. This Wigglesworthia glossinidia brevipalpis protein is Acetyl-coenzyme A carboxylase carboxyl transferase subunit alpha.